The primary structure comprises 525 residues: uncharacterized protein (525 aa).

The first 21 residues, 1 to 21 (MLECLSALLVLFAGGGGSVLA), serve as a signal peptide directing secretion. The Extracellular portion of the chain corresponds to 22 to 448 (AVQSKTVADP…ISAASQLDKR (427 aa)). A disordered region spans residues 242–264 (KVSSENCSKDTDDKSGSKKERNT). Residues 449–469 (IFIFTAITVSITTLMMLGFSY) form a helical membrane-spanning segment. Topologically, residues 470–525 (RSRVSFRDHSIDDSDDDNDWSDDEVEFDEEYFYSLPVSIPEKGISLDKMAQQLGVE) are cytoplasmic.

The protein localises to the membrane. This is an uncharacterized protein from Saccharomyces cerevisiae (strain YJM789) (Baker's yeast).